The chain runs to 223 residues: 7-cyano-7-deazaguanine synthase (223 aa).

15–25 (FSGGQDSTTCL) lines the ATP pocket. The Zn(2+) site is built by cysteine 191, cysteine 200, cysteine 203, and cysteine 206.

It belongs to the QueC family. In terms of assembly, homodimer. The cofactor is Zn(2+).

The catalysed reaction is 7-carboxy-7-deazaguanine + NH4(+) + ATP = 7-cyano-7-deazaguanine + ADP + phosphate + H2O + H(+). It participates in purine metabolism; 7-cyano-7-deazaguanine biosynthesis. Its function is as follows. Catalyzes the ATP-dependent conversion of 7-carboxy-7-deazaguanine (CDG) to 7-cyano-7-deazaguanine (preQ(0)). The polypeptide is 7-cyano-7-deazaguanine synthase (Staphylococcus haemolyticus (strain JCSC1435)).